Reading from the N-terminus, the 326-residue chain is JNK1/MAPK8-associated membrane protein homolog (326 aa).

Topologically, residues 1-71 (MSSLSGHAST…CESCDTPLQP (71 aa)) are lumenal. Residue N27 is glycosylated (N-linked (GlcNAc...) asparagine). A helical membrane pass occupies residues 72–92 (YDWMYLLFIALLPLLLHMQFI). The Cytoplasmic portion of the chain corresponds to 93 to 108 (RIARKYCRTRYYEVSE). Residues 109-129 (YLCVILENVIACVIAVLIYPP) form a helical membrane-spanning segment. Residues 130–166 (RFTFFLNGCSKTDIKEWYPACYNPRIGYTKTMRCTYE) are Lumenal-facing. The helical transmembrane segment at 167–187 (VVFPLYSITFIHHLILIGSIL) threads the bilayer. Over 188-208 (VLRSTLYCVLLYKTYNGKPFY) the chain is Cytoplasmic. Helical transmembrane passes span 209 to 229 (AAIV…GVVF) and 230 to 250 (YTFP…HLAL). The Cytoplasmic portion of the chain corresponds to 251–269 (EGKRPLKEMIVRIATSPTH). A helical membrane pass occupies residues 270 to 290 (LIFLSITMLMLSFGVIAIIAP). Residues 291–296 (LDIPYR) are Lumenal-facing. The helical transmembrane segment at 297-317 (WSFLCIVPVPFIFYMATIPFS) threads the bilayer. Topologically, residues 318 to 326 (NPTTTMRLS) are cytoplasmic.

The protein localises to the endoplasmic reticulum membrane. Its function is as follows. Facilitates degradation of misfolded endoplasmic reticulum (ER) proteins through the recruitment of components of the proteasome and endoplasmic reticulum-associated degradation (ERAD) system. Involved in ER stress response. The chain is JNK1/MAPK8-associated membrane protein homolog from Caenorhabditis elegans.